A 318-amino-acid chain; its full sequence is Pantothenate kinase (318 aa).

Position 96–103 (96–103 (GSVSVGKS)) interacts with ATP.

It belongs to the prokaryotic pantothenate kinase family.

It localises to the cytoplasm. It carries out the reaction (R)-pantothenate + ATP = (R)-4'-phosphopantothenate + ADP + H(+). It participates in cofactor biosynthesis; coenzyme A biosynthesis; CoA from (R)-pantothenate: step 1/5. This chain is Pantothenate kinase, found in Bradyrhizobium sp. (strain ORS 278).